Consider the following 628-residue polypeptide: Probable alpha-L-arabinofuranosidase A (628 aa).

A signal peptide spans 1–25 (MVAFSALSGVSALSLLLCLVQHAHG). N-linked (GlcNAc...) asparagine glycans are attached at residues N36, N51, N74, N152, N171, N260, N359, and N493.

Belongs to the glycosyl hydrolase 51 family.

Its subcellular location is the secreted. The enzyme catalyses Hydrolysis of terminal non-reducing alpha-L-arabinofuranoside residues in alpha-L-arabinosides.. It functions in the pathway glycan metabolism; L-arabinan degradation. Its function is as follows. Alpha-L-arabinofuranosidase involved in the degradation of arabinoxylan, a major component of plant hemicellulose. Acts only on small linear 1,5-alpha-linked L-arabinofuranosyl oligosaccharides. This Aspergillus awamori (Black koji mold) protein is Probable alpha-L-arabinofuranosidase A (abfA).